The primary structure comprises 559 residues: Glycerol kinase (559 aa).

Thr-20 contributes to the ADP binding site. ATP-binding residues include Thr-20, Ser-21, and Ser-22. Thr-20 lines the sn-glycerol 3-phosphate pocket. Residue Arg-24 participates in ADP binding. Sn-glycerol 3-phosphate-binding residues include Arg-94, Glu-95, and Tyr-148. Glycerol-binding residues include Arg-94, Glu-95, and Tyr-148. Gly-252 provides a ligand contact to beta-D-fructose 1,6-bisphosphate. Asp-265 is a sn-glycerol 3-phosphate binding site. Residues Asp-265 and Gln-266 each coordinate glycerol. ADP is bound by residues Thr-287, Gly-332, Gly-433, and Asn-437. Thr-287, Gly-332, and Gly-433 together coordinate ATP. Residue Glu-501 participates in Zn(2+) binding. Residues 532-552 (IFCSLPLGFFIVSSMVMLIGA) form a helical membrane-spanning segment.

This sequence belongs to the FGGY kinase family.

The protein resides in the mitochondrion outer membrane. The protein localises to the nucleus. It is found in the cytoplasm. Its subcellular location is the cytosol. The catalysed reaction is glycerol + ATP = sn-glycerol 3-phosphate + ADP + H(+). It functions in the pathway polyol metabolism; glycerol degradation via glycerol kinase pathway; sn-glycerol 3-phosphate from glycerol: step 1/1. Kinase that plays a key role in glycerol metabolism, catalyzing its phosphorylation to produce sn-glycerol 3-phosphate. Sn-glycerol 3-phosphate is a crucial intermediate in various metabolic pathways, such as the synthesis of glycerolipids and triglycerides, glycogenesis, glycolysis and gluconeogenesis. The sequence is that of Glycerol kinase from Rattus norvegicus (Rat).